Consider the following 387-residue polypeptide: Phosphoglycerate kinase (387 aa).

Substrate contacts are provided by residues 21–23 (DLN), arginine 36, 59–62 (HLGR), arginine 113, and arginine 146. ATP contacts are provided by residues lysine 197, glutamate 314, and 340–343 (GGDT).

It belongs to the phosphoglycerate kinase family. In terms of assembly, monomer.

It localises to the cytoplasm. The catalysed reaction is (2R)-3-phosphoglycerate + ATP = (2R)-3-phospho-glyceroyl phosphate + ADP. It functions in the pathway carbohydrate degradation; glycolysis; pyruvate from D-glyceraldehyde 3-phosphate: step 2/5. The sequence is that of Phosphoglycerate kinase from Aliivibrio salmonicida (strain LFI1238) (Vibrio salmonicida (strain LFI1238)).